The following is a 225-amino-acid chain: Uracil-DNA glycosylase (225 aa).

The active-site Proton acceptor is the aspartate 65.

This sequence belongs to the uracil-DNA glycosylase (UDG) superfamily. UNG family.

It is found in the cytoplasm. The enzyme catalyses Hydrolyzes single-stranded DNA or mismatched double-stranded DNA and polynucleotides, releasing free uracil.. Functionally, excises uracil residues from the DNA which can arise as a result of misincorporation of dUMP residues by DNA polymerase or due to deamination of cytosine. This Clostridium botulinum (strain Alaska E43 / Type E3) protein is Uracil-DNA glycosylase.